A 175-amino-acid chain; its full sequence is GTP-dependent dephospho-CoA kinase (175 aa).

5 residues coordinate GTP: Asp-48, Val-49, Val-50, Asp-66, and Glu-124.

This sequence belongs to the GTP-dependent DPCK family.

The enzyme catalyses 3'-dephospho-CoA + GTP = GDP + CoA + H(+). The protein operates within cofactor biosynthesis; coenzyme A biosynthesis. Catalyzes the GTP-dependent phosphorylation of the 3'-hydroxyl group of dephosphocoenzyme A to form coenzyme A (CoA). The chain is GTP-dependent dephospho-CoA kinase from Thermofilum pendens (strain DSM 2475 / Hrk 5).